The primary structure comprises 377 residues: Succinyl-diaminopimelate desuccinylase (377 aa).

His68 is a Zn(2+) binding site. Asp70 is a catalytic residue. Asp101 serves as a coordination point for Zn(2+). Glu135 serves as the catalytic Proton acceptor. Glu136, Glu164, and His350 together coordinate Zn(2+).

This sequence belongs to the peptidase M20A family. DapE subfamily. As to quaternary structure, homodimer. The cofactor is Zn(2+). Requires Co(2+) as cofactor.

The enzyme catalyses N-succinyl-(2S,6S)-2,6-diaminopimelate + H2O = (2S,6S)-2,6-diaminopimelate + succinate. It participates in amino-acid biosynthesis; L-lysine biosynthesis via DAP pathway; LL-2,6-diaminopimelate from (S)-tetrahydrodipicolinate (succinylase route): step 3/3. Functionally, catalyzes the hydrolysis of N-succinyl-L,L-diaminopimelic acid (SDAP), forming succinate and LL-2,6-diaminopimelate (DAP), an intermediate involved in the bacterial biosynthesis of lysine and meso-diaminopimelic acid, an essential component of bacterial cell walls. The polypeptide is Succinyl-diaminopimelate desuccinylase (Psychromonas ingrahamii (strain DSM 17664 / CCUG 51855 / 37)).